The primary structure comprises 316 residues: ATP synthase gamma chain (316 aa).

It belongs to the ATPase gamma chain family. In terms of assembly, F-type ATPases have 2 components, CF(1) - the catalytic core - and CF(0) - the membrane proton channel. CF(1) has five subunits: alpha(3), beta(3), gamma(1), delta(1), epsilon(1). CF(0) has three main subunits: a, b and c.

The protein resides in the cellular thylakoid membrane. In terms of biological role, produces ATP from ADP in the presence of a proton gradient across the membrane. The gamma chain is believed to be important in regulating ATPase activity and the flow of protons through the CF(0) complex. In Prochlorococcus marinus (strain SARG / CCMP1375 / SS120), this protein is ATP synthase gamma chain.